The primary structure comprises 529 residues: GTPase Obg (529 aa).

The Obg domain occupies 2–159 (ASFVDRVVLH…SDIVLELKSI (158 aa)). Residues 160–343 (ADIALVGFPS…LGFAMAEIVK (184 aa)) form the OBG-type G domain. Residues 166–173 (GFPSAGKS), 191–195 (FTTLI), 212–215 (DVPG), 295–298 (NKVD), and 324–326 (SAT) each bind GTP. Mg(2+) contacts are provided by S173 and T193. Residues 363 to 447 (PRAVNETGFR…DDGVVFDWEP (85 aa)) enclose the OCT domain. The disordered stretch occupies residues 461 to 529 (GTDIRFADTG…ESGLDSGDES (69 aa)). Residues 462–502 (TDIRFADTGDRPTRSQKREEQQERRDAKAAARAELEAERKA) are compositionally biased toward basic and acidic residues.

Belongs to the TRAFAC class OBG-HflX-like GTPase superfamily. OBG GTPase family. Monomer. Mg(2+) serves as cofactor.

Its subcellular location is the cytoplasm. Functionally, an essential GTPase which binds GTP, GDP and possibly (p)ppGpp with moderate affinity, with high nucleotide exchange rates and a fairly low GTP hydrolysis rate. Plays a role in control of the cell cycle, stress response, ribosome biogenesis and in those bacteria that undergo differentiation, in morphogenesis control. The sequence is that of GTPase Obg from Pseudarthrobacter chlorophenolicus (strain ATCC 700700 / DSM 12829 / CIP 107037 / JCM 12360 / KCTC 9906 / NCIMB 13794 / A6) (Arthrobacter chlorophenolicus).